The primary structure comprises 314 residues: Small ribosomal subunit protein uS2c (314 aa).

The protein belongs to the universal ribosomal protein uS2 family.

The protein localises to the plastid. It is found in the chloroplast. The protein is Small ribosomal subunit protein uS2c (rps2) of Stigeoclonium helveticum (Green alga).